Reading from the N-terminus, the 162-residue chain is Phosphopantetheine adenylyltransferase (162 aa).

Ser-9 is a substrate binding site. ATP-binding positions include 9–10 and His-17; that span reads SF. Positions 41, 73, and 87 each coordinate substrate. ATP is bound by residues 88–90, Glu-98, and 122–128; these read GLR and NQNISSS.

The protein belongs to the bacterial CoaD family. In terms of assembly, homohexamer. Mg(2+) is required as a cofactor.

The protein resides in the cytoplasm. The enzyme catalyses (R)-4'-phosphopantetheine + ATP + H(+) = 3'-dephospho-CoA + diphosphate. Its pathway is cofactor biosynthesis; coenzyme A biosynthesis; CoA from (R)-pantothenate: step 4/5. Its function is as follows. Reversibly transfers an adenylyl group from ATP to 4'-phosphopantetheine, yielding dephospho-CoA (dPCoA) and pyrophosphate. This is Phosphopantetheine adenylyltransferase from Leuconostoc mesenteroides subsp. mesenteroides (strain ATCC 8293 / DSM 20343 / BCRC 11652 / CCM 1803 / JCM 6124 / NCDO 523 / NBRC 100496 / NCIMB 8023 / NCTC 12954 / NRRL B-1118 / 37Y).